A 337-amino-acid polypeptide reads, in one-letter code: GDP-fucose transporter, Golgi (337 aa).

Helical transmembrane passes span 13–35 (NKYL…TVFV), 45–67 (VNLG…ICFV), 95–117 (ILPL…SYVT), 121–140 (YYIG…YVIL), 145–163 (SFKC…WLGV), 173–192 (SWRG…MFSI), 205–227 (VWLL…IIIN), and 242–264 (SWFW…VTAL).

It belongs to the TPT transporter family. SLC35C subfamily.

Its subcellular location is the golgi apparatus membrane. Involved in GDP-fucose import from the cytoplasm into the Golgi lumen. Plays a major role in the fucosylation of N-glycans. Functions redundantly with Efr in the O-fucosylation of Notch, positively regulating Notch signaling. The polypeptide is GDP-fucose transporter, Golgi (Drosophila melanogaster (Fruit fly)).